Consider the following 424-residue polypeptide: MIDPRVLRDEPDRVRAAQVKRGLSDEVVDHALSADGERRRAIAAFEAKRAEQKQLGKLIPQAQGEEKQALLAQTKTLAAEVKQAEAAQAVAEEAWQAALMSIPNLAADEAPAGGEDDYVVLEEIGTPRDFAADGFEPRDHIELGRMLGAIDLDRGAKVSGSRFYFLTGAGAELELALVNLAMQQARESGFTPVIAPSMVKPRAMDGTGFLGQAADDVYRIEGQDMYLVGTSEVPMAAYHSDEILDGGALPLRYAAFSPCFRKEAGSHGKDTKGIIRVHWFDKVEMFVYTTTEESYAEHQRLLAWEKEFLEKLELAYRVIDVAAGDLGLSAQRKFDCEAWIPTQGRYRELTSTSNCTEFQTRRLDTRGRFGSEIRPISTLNGTLCAITRTIVAVLETHQQADGSVRVPKALQPWLGREVLEPVTT.

230-232 (TSE) contributes to the L-serine binding site. ATP contacts are provided by residues 261 to 263 (RKE) and V277. L-serine is bound at residue E284. 348 to 351 (ELTS) provides a ligand contact to ATP. Residue T382 coordinates L-serine.

The protein belongs to the class-II aminoacyl-tRNA synthetase family. Type-1 seryl-tRNA synthetase subfamily. Homodimer. The tRNA molecule binds across the dimer.

Its subcellular location is the cytoplasm. It carries out the reaction tRNA(Ser) + L-serine + ATP = L-seryl-tRNA(Ser) + AMP + diphosphate + H(+). It catalyses the reaction tRNA(Sec) + L-serine + ATP = L-seryl-tRNA(Sec) + AMP + diphosphate + H(+). It participates in aminoacyl-tRNA biosynthesis; selenocysteinyl-tRNA(Sec) biosynthesis; L-seryl-tRNA(Sec) from L-serine and tRNA(Sec): step 1/1. In terms of biological role, catalyzes the attachment of serine to tRNA(Ser). Is also able to aminoacylate tRNA(Sec) with serine, to form the misacylated tRNA L-seryl-tRNA(Sec), which will be further converted into selenocysteinyl-tRNA(Sec). The polypeptide is Serine--tRNA ligase (Nocardioides sp. (strain ATCC BAA-499 / JS614)).